The chain runs to 289 residues: D-xylonolactone lactonase (289 aa).

Glu-17 is a binding site for Fe(2+). The D-xylono-1,5-lactone site is built by Arg-98, Asn-100, Glu-119, and Asn-145. Asn-145 and Asp-195 together coordinate Fe(2+). The active-site Proton donor/acceptor is the Asp-195.

The protein belongs to the SMP-30/CGR1 family. Requires Fe(2+) as cofactor.

It carries out the reaction D-xylono-1,5-lactone + H2O = D-xylonate + H(+). In terms of biological role, involved in the degradation of D-xylose. Catalyzes the hydrolysis of D-xylonolactone to D-xylonate. This chain is D-xylonolactone lactonase, found in Caulobacter vibrioides (strain ATCC 19089 / CIP 103742 / CB 15) (Caulobacter crescentus).